We begin with the raw amino-acid sequence, 472 residues long: Guanine nucleotide-binding protein alpha-1 subunit (472 aa).

G2 is lipidated: N-myristoyl glycine. Residue C3 is the site of S-palmitoyl cysteine attachment. The G-alpha domain maps to 40–472; it reads NEIKLLLLGA…QQNLKKIGII (433 aa). Residues 43–56 form a G1 motif region; the sequence is KLLLLGAGESGKST. 6 residues coordinate GTP: E51, S52, G53, K54, S55, and T56. Residue S55 participates in Mg(2+) binding. Residues 127–235 are insert; not present in other G-proteins; it reads LDYINASVAG…REIQGQNRRN (109 aa). The disordered stretch occupies residues 162–199; that stretch reads GRAKAAFDEDGNISNVKSDTDRDAETVTQNEDADRNNS. K165 participates in a covalent cross-link: Glycyl lysine isopeptide (Lys-Gly) (interchain with G-Cter in ubiquitin). The segment at 292–300 is G2 motif; the sequence is DILKGRIKT. Positions 294, 300, 322, 388, 389, 391, and 444 each coordinate GTP. T300 provides a ligand contact to Mg(2+). The interval 315-324 is G3 motif; that stretch reads FKVLDAGGQR. The tract at residues 384–391 is G4 motif; it reads ILFLNKID. Positions 442–447 are G5 motif; it reads TCATDT.

It belongs to the G-alpha family. G(q) subfamily. In terms of assembly, g proteins are composed of 3 units; alpha, beta and gamma. The alpha chain contains the guanine nucleotide binding site. In its GDP-bound form, binds to the G protein beta-gamma dimer STE4-STE18. Directly interacts with the beta subunit STE4. Probably forms preactivation complexes with unligated receptors STE2 and STE3. Interacts with FUS3. Pheromone-induced activation of GPA1 increases its association with FUS3. Interacts with SCP160. SCP160 binds specifically to the GTP-bound form of GPA1. Interacts with the phosphatidylinositol 3-kinase (PI3K) subunits VPS15 and VPS34 at the endosome. The GTP-bound form of GPA1 binds directly and selectively to the catalytic subunit VPS34, while the GDP-bound form binds to VPS15, which appears to function as an alternative G protein beta subunit for GPA1. Interacts with regulators of G protein signaling (RGS) proteins MDM1, RAX1, RGS2 and SST2, but SST2 alone binds preferentially to the transition state conformation of GPA1, indicating that it acts as a GAP for this G protein. Mg(2+) serves as cofactor. Post-translationally, N-myristoylation by NMT1 is pheromone-stimulated and required for palmitoylation of Cys-3. This lipid modification anchors the protein to membranes. Depalmitoylated by YLR118C/APT1. In terms of processing, monoubiquitination targets the protein for degradation to the vacuole, and polyubiquitination tags the protein for degradation by the proteasome. This may be an additional signaling regulation mechanism.

The protein localises to the cell membrane. The protein resides in the endosome membrane. Alternates between an inactive form bound to GDP and an active form bound to GTP. Activated by the G protein coupled receptors (GPCRs) STE2 and STE3, which serve as guanine nucleotide-exchange factors (GEFs), and inactivated by SST2, probably acting as a GTPase-activating protein (GAP). Alpha subunit of the heterotrimeric guanine nucleotide-binding protein (G protein) that mediates mating pheromone signal transduction. Binding of alpha-factor or a-factor to its cognate transmembrane receptor STE2 and STE3, respectively, allows the receptor to serve as a guanine nucleotide exchange factor (GEF) on GPA1. The exchange of GDP for GTP on the G protein alpha subunit alters its interaction with the G protein beta subunit STE4, leading to dissociation of the G protein beta-gamma dimer STE4-STE18. The dissociated subunits activate downstream effectors to activate the mating response pathway and induce changes necessary to produce mating-competent cells. STE4-STE18 activate the downstream pheromone signaling MAP kinase cascade leading to expression of mating-specific genes, inducing cell cycle arrest in G1, promoting polarized cell growth to form mating projections (shmoos), and establishing the changes in plasma membrane, cell wall and nuclear envelope to permit cell-cell fusion (plasmogamy) and fusion of the two haploid nuclei (karyogamy). GPA1 transmits a signal that requires direct binding to the effector enzyme PI3K located at the endosome, promoting increased PI3 production. The intrinsic GTPase activity of GPA1 determines the duration of signaling, and is dramatically accelerated by the RGS protein SST2. In unstimulated cells, GDP-bound GPA1 sequesters the G protein beta-gamma subunit STE4-STE18, preventing it from activating the downstream effectors. Also down-regulates the signal by inhibiting the pheromone-induced accumulation of FUS3 in the nucleus. The sequence is that of Guanine nucleotide-binding protein alpha-1 subunit (GPA1) from Saccharomyces cerevisiae (strain ATCC 204508 / S288c) (Baker's yeast).